A 141-amino-acid polypeptide reads, in one-letter code: Hemoglobin subunit alpha (141 aa).

The Globin domain occupies 1–141 (VLSSADKANI…VSTVLTSKYR (141 aa)). Serine 3 carries the post-translational modification Phosphoserine. Residues lysine 7 and lysine 11 each carry the N6-succinyllysine modification. Lysine 16 is modified (N6-acetyllysine; alternate). Residue lysine 16 is modified to N6-succinyllysine; alternate. Position 24 is a phosphotyrosine (tyrosine 24). Lysine 40 carries the N6-succinyllysine modification. Serine 49 is subject to Phosphoserine. Histidine 58 serves as a coordination point for O2. Histidine 87 lines the heme b pocket. Serine 102 carries the phosphoserine modification. Threonine 108 carries the phosphothreonine modification. 2 positions are modified to phosphoserine: serine 124 and serine 131. Phosphothreonine is present on residues threonine 134 and threonine 137. Phosphoserine is present on serine 138.

Belongs to the globin family. Heterotetramer of two alpha chains and two beta chains. Red blood cells.

Involved in oxygen transport from the lung to the various peripheral tissues. In terms of biological role, hemopressin acts as an antagonist peptide of the cannabinoid receptor CNR1. Hemopressin-binding efficiently blocks cannabinoid receptor CNR1 and subsequent signaling. This Proteles cristata (Aardwolf) protein is Hemoglobin subunit alpha (HBA).